The chain runs to 182 residues: Dynactin subunit 5 (182 aa).

M1 carries the N-acetylmethionine modification.

The protein belongs to the dynactin subunits 5/6 family. Dynactin subunit 5 subfamily. As to quaternary structure, subunit of dynactin, a multiprotein complex part of a tripartite complex with dynein and a adapter, such as BICDL1, BICD2 or HOOK3. The dynactin complex is built around ACTR1A/ACTB filament and consists of an actin-related filament composed of a shoulder domain, a pointed end and a barbed end. Its length is defined by its flexible shoulder domain. The soulder is composed of 2 DCTN1 subunits, 4 DCTN2 and 2 DCTN3. The 4 DCNT2 (via N-terminus) bind the ACTR1A filament and act as molecular rulers to determine the length. The pointed end is important for binding dynein-dynactin cargo adapters. Consists of 4 subunits: ACTR10, DCNT4, DCTN5 and DCTN6. Within the complex DCTN6 forms a heterodimer with DCTN5. The barbed end is composed of a CAPZA1:CAPZB heterodimers, which binds ACTR1A/ACTB filament and dynactin and stabilizes dynactin. Interacts with N4BP2L1.

It is found in the cytoplasm. The protein localises to the cytoskeleton. Its subcellular location is the chromosome. The protein resides in the centromere. It localises to the kinetochore. In terms of biological role, part of the dynactin complex that activates the molecular motor dynein for ultra-processive transport along microtubules. The sequence is that of Dynactin subunit 5 from Homo sapiens (Human).